Reading from the N-terminus, the 436-residue chain is 3-ketoacyl-CoA thiolase (436 aa).

C99 serves as the catalytic Acyl-thioester intermediate. Active-site proton acceptor residues include H392 and C422.

This sequence belongs to the thiolase-like superfamily. Thiolase family. As to quaternary structure, heterotetramer of two alpha chains (FadJ) and two beta chains (FadI).

It is found in the cytoplasm. It carries out the reaction an acyl-CoA + acetyl-CoA = a 3-oxoacyl-CoA + CoA. It participates in lipid metabolism; fatty acid beta-oxidation. In terms of biological role, catalyzes the final step of fatty acid oxidation in which acetyl-CoA is released and the CoA ester of a fatty acid two carbons shorter is formed. This is 3-ketoacyl-CoA thiolase from Shewanella sediminis (strain HAW-EB3).